The chain runs to 667 residues: Bifunctional polymyxin resistance protein ArnA (667 aa).

The tract at residues 1 to 304 (MKAIVFAYHD…EMGIVTDVRL (304 aa)) is formyltransferase ArnAFT. The active-site Proton donor; for formyltransferase activity is the H104. (6R)-10-formyltetrahydrofolate is bound by residues R114 and 136 to 140 (VKKAD). Positions 314 to 667 (RRTRVLILGV…TAAPKDELNA (354 aa)) are dehydrogenase ArnADH. Residues D347 and 368-369 (DI) each bind NAD(+). UDP-alpha-D-glucuronate is bound by residues A393, Y398, and 432-433 (TS). The Proton acceptor; for decarboxylase activity role is filled by E434. Residues R460, N492, 526–535 (KLVDGGAQKR), and Y613 each bind UDP-alpha-D-glucuronate. R619 serves as the catalytic Proton donor; for decarboxylase activity.

The protein in the N-terminal section; belongs to the Fmt family. UDP-L-Ara4N formyltransferase subfamily. This sequence in the C-terminal section; belongs to the NAD(P)-dependent epimerase/dehydratase family. UDP-glucuronic acid decarboxylase subfamily. Homohexamer, formed by a dimer of trimers.

The enzyme catalyses UDP-alpha-D-glucuronate + NAD(+) = UDP-beta-L-threo-pentopyranos-4-ulose + CO2 + NADH. The catalysed reaction is UDP-4-amino-4-deoxy-beta-L-arabinose + (6R)-10-formyltetrahydrofolate = UDP-4-deoxy-4-formamido-beta-L-arabinose + (6S)-5,6,7,8-tetrahydrofolate + H(+). It functions in the pathway nucleotide-sugar biosynthesis; UDP-4-deoxy-4-formamido-beta-L-arabinose biosynthesis; UDP-4-deoxy-4-formamido-beta-L-arabinose from UDP-alpha-D-glucuronate: step 1/3. The protein operates within nucleotide-sugar biosynthesis; UDP-4-deoxy-4-formamido-beta-L-arabinose biosynthesis; UDP-4-deoxy-4-formamido-beta-L-arabinose from UDP-alpha-D-glucuronate: step 3/3. It participates in bacterial outer membrane biogenesis; lipopolysaccharide biosynthesis. Its function is as follows. Bifunctional enzyme that catalyzes the oxidative decarboxylation of UDP-glucuronic acid (UDP-GlcUA) to UDP-4-keto-arabinose (UDP-Ara4O) and the addition of a formyl group to UDP-4-amino-4-deoxy-L-arabinose (UDP-L-Ara4N) to form UDP-L-4-formamido-arabinose (UDP-L-Ara4FN). The modified arabinose is attached to lipid A and is required for resistance to polymyxin and cationic antimicrobial peptides. The sequence is that of Bifunctional polymyxin resistance protein ArnA from Yersinia pseudotuberculosis serotype IB (strain PB1/+).